A 37-amino-acid chain; its full sequence is uncharacterized protein (37 aa).

A signal peptide spans 1 to 23; the sequence is MLNFSLCLYPVFILNKLVLRTQS.

The protein belongs to the orthopoxviruses VACWR204.5 protein family.

This is an uncharacterized protein from Vaccinia virus (strain Western Reserve) (VACV).